Consider the following 339-residue polypeptide: Senescence-specific cysteine protease SAG39 (339 aa).

A signal peptide spans 1-23; it reads MAMAKALLFAILGCLCLCSAVLA. 3 disulfide bridges follow: cysteine 144–cysteine 187, cysteine 178–cysteine 220, and cysteine 276–cysteine 328. Residue cysteine 147 is part of the active site. Catalysis depends on residues histidine 282 and asparagine 303.

The protein belongs to the peptidase C1 family. In terms of tissue distribution, low expression in mature leaves.

The protein localises to the vacuole. In terms of biological role, cysteine protease that may have a developmental senescence specific cell death function during apoptosis, heavy metal detoxification, and hypersensitive response. The protein is Senescence-specific cysteine protease SAG39 of Oryza sativa subsp. japonica (Rice).